The primary structure comprises 403 residues: Probable eukaryotic initiation factor 4A (403 aa).

The interval 1–29 (MAQNDKIAPQDQDSFLDDQPGVRPIPSFD) is disordered. The Q motif signature appears at 26-54 (PSFDDMPLHQNLLRGIYSYGFEKPSSIQQ). One can recognise a Helicase ATP-binding domain in the interval 57–230 (IAPFTRGGDI…KKFMRDPVRI (174 aa)). 70-77 (AQSGTGKT) contacts ATP. Positions 178-181 (DEAD) match the DEAD box motif. In terms of domain architecture, Helicase C-terminal spans 241–401 (GIKQFFIAVE…ELPVDFAAYL (161 aa)).

This sequence belongs to the DEAD box helicase family. eIF4A subfamily. EIF4F is a multi-subunit complex, the composition of which varies with external and internal environmental conditions. It is composed of at least EIF4A, EIF4E and EIF4G.

It carries out the reaction ATP + H2O = ADP + phosphate + H(+). Functionally, ATP-dependent RNA helicase which is a subunit of the eIF4F complex involved in cap recognition and is required for mRNA binding to ribosome. In the current model of translation initiation, eIF4A unwinds RNA secondary structures in the 5'-UTR of mRNAs which is necessary to allow efficient binding of the small ribosomal subunit, and subsequent scanning for the initiator codon. This is Probable eukaryotic initiation factor 4A from Leishmania infantum.